Reading from the N-terminus, the 864-residue chain is Leucine--tRNA ligase (864 aa).

The short motif at Pro-42–His-52 is the 'HIGH' region element. The short motif at Lys-624 to Ser-628 is the 'KMSKS' region element. Lys-627 serves as a coordination point for ATP.

Belongs to the class-I aminoacyl-tRNA synthetase family.

The protein resides in the cytoplasm. It carries out the reaction tRNA(Leu) + L-leucine + ATP = L-leucyl-tRNA(Leu) + AMP + diphosphate. This chain is Leucine--tRNA ligase, found in Paraburkholderia phymatum (strain DSM 17167 / CIP 108236 / LMG 21445 / STM815) (Burkholderia phymatum).